We begin with the raw amino-acid sequence, 156 residues long: Cyanate hydratase (156 aa).

Active-site residues include arginine 96, glutamate 99, and serine 122.

This sequence belongs to the cyanase family.

The catalysed reaction is cyanate + hydrogencarbonate + 3 H(+) = NH4(+) + 2 CO2. Its function is as follows. Catalyzes the reaction of cyanate with bicarbonate to produce ammonia and carbon dioxide. The chain is Cyanate hydratase from Escherichia coli O9:H4 (strain HS).